The chain runs to 119 residues: Bombesin (119 aa).

The first 29 residues, 1 to 29 (MSAIPLNRILPLGFLFHLLIFSFISLSSC), serve as a signal peptide directing secretion. Residues 30-44 (MEFVEDPNNQGRISL) constitute a propeptide that is removed on maturation. Position 58 is a methionine amide (methionine 58). A propeptide spanning residues 62-119 (SLQDTDFEEMESFAKRNVENMRAALLQEQNRAESERELRHAQLVVRNILEQYLKNMQN) is cleaved from the precursor.

This sequence belongs to the bombesin/neuromedin-B/ranatensin family. Localized to the cutaneous granular glands in the skin and the brain.

The protein localises to the secreted. In terms of biological role, stimulates smooth muscle contraction. Role in induction of hypothermia, stimulation of DNA replication and release of many gastrointestinal hormones. The chain is Bombesin from Bombina orientalis (Oriental fire-bellied toad).